A 258-amino-acid polypeptide reads, in one-letter code: Trans-aconitate 2-methyltransferase (258 aa).

Belongs to the methyltransferase superfamily. Tam family.

The protein localises to the cytoplasm. The enzyme catalyses trans-aconitate + S-adenosyl-L-methionine = (E)-3-(methoxycarbonyl)pent-2-enedioate + S-adenosyl-L-homocysteine. Catalyzes the S-adenosylmethionine monomethyl esterification of trans-aconitate. This Acidovorax ebreus (strain TPSY) (Diaphorobacter sp. (strain TPSY)) protein is Trans-aconitate 2-methyltransferase.